The primary structure comprises 226 residues: ATP synthase subunit a (226 aa).

5 helical membrane passes run 20-40 (LNWFSTFIGLLIIPSTFWLMP), 74-94 (FVSLFSLIMFNNFLGLFPYIF), 100-120 (LTLTLTLAFPLWLSFMLYGWI), 162-182 (LTANMIAGHLLMTLLGNTGPM), and 187-207 (IILSMILITQIALLVLESAVA).

It belongs to the ATPase A chain family. In terms of assembly, F-type ATPases have 2 components, CF(1) - the catalytic core - and CF(0) - the membrane proton channel. CF(1) has five subunits: alpha(3), beta(3), gamma(1), delta(1), epsilon(1). CF(0) has three main subunits: a, b and c.

The protein resides in the mitochondrion inner membrane. Mitochondrial membrane ATP synthase (F(1)F(0) ATP synthase or Complex V) produces ATP from ADP in the presence of a proton gradient across the membrane which is generated by electron transport complexes of the respiratory chain. F-type ATPases consist of two structural domains, F(1) - containing the extramembraneous catalytic core and F(0) - containing the membrane proton channel, linked together by a central stalk and a peripheral stalk. During catalysis, ATP synthesis in the catalytic domain of F(1) is coupled via a rotary mechanism of the central stalk subunits to proton translocation. Key component of the proton channel; it may play a direct role in the translocation of protons across the membrane. The polypeptide is ATP synthase subunit a (mt:ATPase6) (Aedes albopictus (Asian tiger mosquito)).